The chain runs to 381 residues: MPPSQTPAQGSGRFLLLSPPSLSSHPEKLNAILGLHARESTDLQMLDRLALGLVSLPESTYDVVLLLTGADNTLAETYRLVSRGVLQGVVNSLKPGGKLRNRDNQIWGSGSDSAAGLGSSDGDGGGGEKMSSSEQAFRNEAILAGLVFDDRGELAKPDFGAQQAVPLKLGRKKNLGESAFGNGAVELPASNGVRVTTGATSSTTTTTTTTAAAAAATAATPTTTTTTTINSSTPSGVGFIDFSDDFGVPMVEETQDSDEELIDEEELLGEYDMGRHIVQPPECRPKAGKRRRACKDCTCGLSQKLEAEDRAKRANADKALETLKLRTNDLAEVDFTVQGKVGSCGNCALGDAFRCDGCPYIGLPAFKPGEEVRLLNNDVQL.

Positions 8 to 165 (AQGSGRFLLL…KPDFGAQQAV (158 aa)) are N-terminal SAM-like domain. A disordered region spans residues 100–134 (RNRDNQIWGSGSDSAAGLGSSDGDGGGGEKMSSSE). Residues 108–118 (GSGSDSAAGLG) show a composition bias toward low complexity. Residues 119–128 (SSDGDGGGGE) show a composition bias toward gly residues. The interval 166 to 273 (PLKLGRKKNL…EEELLGEYDM (108 aa)) is linker. [2Fe-2S] cluster contacts are provided by Cys283, Cys294, Cys297, and Cys299. Residues 283 to 299 (CRPKAGKRRRACKDCTC) form a fe-S binding site A region. 4 residues coordinate [4Fe-4S] cluster: Cys344, Cys347, Cys355, and Cys358. 2 short sequence motifs (cx2C motif) span residues 344–347 (CGNC) and 355–358 (CDGC). A fe-S binding site B region spans residues 344-358 (CGNCALGDAFRCDGC).

The protein belongs to the anamorsin family. In terms of assembly, monomer. Interacts with TAH18. Interacts with MIA40. The cofactor is [2Fe-2S] cluster. It depends on [4Fe-4S] cluster as a cofactor.

Its subcellular location is the cytoplasm. The protein resides in the mitochondrion intermembrane space. Its function is as follows. Component of the cytosolic iron-sulfur (Fe-S) protein assembly (CIA) machinery required for the maturation of extramitochondrial Fe-S proteins. Part of an electron transfer chain functioning in an early step of cytosolic Fe-S biogenesis, facilitating the de novo assembly of a [4Fe-4S] cluster on the scaffold complex CFD1-NBP35. Electrons are transferred to DRE2 from NADPH via the FAD- and FMN-containing protein TAH18. TAH18-DRE2 are also required for the assembly of the diferric tyrosyl radical cofactor of ribonucleotide reductase (RNR), probably by providing electrons for reduction during radical cofactor maturation in the catalytic small subunit RNR2. The sequence is that of Fe-S cluster assembly protein DRE2 from Paracoccidioides brasiliensis (strain Pb18).